The chain runs to 714 residues: Methyl-accepting chemotaxis protein TlpQ (714 aa).

A helical membrane pass occupies residues 12 to 32; the sequence is ITLLAGLCLLGVVALLVGLSV. In terms of domain architecture, Cache spans 50 to 290; that stretch reads LDESARLRLE…LLGKNLAKAD (241 aa). Histamine is bound by residues E170, 208–210, and D239; that span reads YFD. A helical membrane pass occupies residues 360-380; it reads TWVELGLGLGAAVLGLLVLWL. One can recognise an HAMP domain in the interval 383–437; the sequence is RGVTRPILGVAHMLRDIASGEGDLTQRLPHTGRDELGELAGWFNRFLDKLQPIIR. The region spanning 442–678 is the Methyl-accepting transducer domain; the sequence is SVRDARSTAD…EINRNVAAIR (237 aa).

The protein belongs to the methyl-accepting chemotaxis (MCP) protein family. Homotetramer.

The protein resides in the cell membrane. In terms of biological role, chemotactic-signal transducers respond to changes in the concentration of attractants and repellents in the environment, transduce a signal from the outside to the inside of the cell, and facilitate sensory adaptation through the variation of the level of methylation. TlpQ is a chemoreceptor that binds and mediates chemotaxis to histamine, a key biological signaling molecule. It binds histamine with high affinity, which permits responses to very low histamine concentrations. Chemotaxis to histamine may play a role in the virulence of P.aeruginosa by recruiting cells at the infection site and consequently modulating the expression of quorum-sensing-dependent virulence genes. TlpQ also binds and mediates chemotaxis to polyamines such as putrescine, spermidine, cadaverine, agmatine and ethylenediamine. In addition, binds the quorum-sensing signal autoinducer 2 (AI-2), thus inducing chemotaxis toward AI-2 and biofilm formation. The protein is Methyl-accepting chemotaxis protein TlpQ of Pseudomonas aeruginosa (strain ATCC 15692 / DSM 22644 / CIP 104116 / JCM 14847 / LMG 12228 / 1C / PRS 101 / PAO1).